We begin with the raw amino-acid sequence, 444 residues long: Inward rectifier potassium channel 4 (444 aa).

The Cytoplasmic portion of the chain corresponds to 1 to 55; it reads MHGHNRNGQAHVPRRKRRNRFVKKNGQCNVYFANLSNKSQRYMADIFTTCVDTRW. Residues 56–80 form a helical membrane-spanning segment; that stretch reads RYMLMLFSAAFLVSWLFFGLLFWCI. At 81-119 the chain is on the extracellular side; the sequence is AFFHGDLEASPSVPAAGAPGGNGGAAPAAPKPCIMHVNG. The helical; Pore-forming intramembrane region spans 120 to 131; it reads FLGAFLFSVETQ. The segment at residues 132–138 is an intramembrane region (pore-forming); the sequence is TTIGYGF. The short motif at 133 to 138 is the Selectivity filter element; it reads TIGYGF. Residues 139–147 lie on the Extracellular side of the membrane; that stretch reads RCVTEECPL. The helical transmembrane segment at 148–169 threads the bilayer; sequence AVIAVVVQSIVGCVIDSFMIGT. Residues 170-444 are Cytoplasmic-facing; the sequence is IMAKMARPKK…NISYRRESAI (275 aa). Positions 442-444 match the PDZ-binding motif; that stretch reads SAI.

It belongs to the inward rectifier-type potassium channel (TC 1.A.2.1) family. KCNJ4 subfamily. As to quaternary structure, homomultimeric and heteromultimeric association with KCNJ2 and KCNJ12. Interacts with DLG2 and DLG4. Associates, via its PDZ-recognition domain, with a complex containing LIN7A, LIN7B, LIN7C, DLG1, CASK and APBA1. Interacts with TAX1BP3. TAX1BP3 competes with LIN7 family members for KCNJ4 binding.

The protein resides in the cell membrane. Its subcellular location is the postsynaptic cell membrane. The protein localises to the cytoplasmic vesicle membrane. The catalysed reaction is K(+)(in) = K(+)(out). Functionally, inward rectifier potassium channels are characterized by a greater tendency to allow potassium to flow into the cell rather than out of it. Their voltage dependence is regulated by the concentration of extracellular potassium; as external potassium is raised, the voltage range of the channel opening shifts to more positive voltages. The inward rectification is mainly due to the blockage of outward current by internal magnesium. Can be blocked by extracellular barium and cesium. This Mesocricetus auratus (Golden hamster) protein is Inward rectifier potassium channel 4 (KCNJ4).